The chain runs to 28 residues: Conotoxin Cl5.3 (28 aa).

It belongs to the conotoxin T superfamily. Contains 2 disulfide bonds that can be either 'C1-C3, C2-C4' or 'C1-C4, C2-C3', since these disulfide connectivities have been observed for conotoxins with cysteine framework V (for examples, see AC P0DQQ7 and AC P81755). As to expression, expressed by the venom duct.

It localises to the secreted. This Californiconus californicus (California cone) protein is Conotoxin Cl5.3.